Consider the following 524-residue polypeptide: Glucose-6-phosphate 1-dehydrogenase (524 aa).

The residue at position 20 (serine 20) is a Phosphoserine. Residues 42-49 (GASGDLAK), arginine 76, and lysine 175 contribute to the NADP(+) site. Residues lysine 175, 205 to 209 (HYLGK), glutamate 243, and aspartate 262 each bind D-glucose 6-phosphate. Histidine 267 serves as the catalytic Proton acceptor. Arginine 362 is an NADP(+) binding site. D-glucose 6-phosphate is bound by residues lysine 365 and arginine 370. NADP(+) is bound by residues lysine 371, arginine 375, and arginine 398. Residue glutamine 400 coordinates D-glucose 6-phosphate. NADP(+) contacts are provided by residues 406–408 (YFK), 426–428 (DLT), arginine 492, tyrosine 508, and tryptophan 514.

This sequence belongs to the glucose-6-phosphate dehydrogenase family.

It localises to the cytoplasm. Its subcellular location is the cytosol. The enzyme catalyses D-glucose 6-phosphate + NADP(+) = 6-phospho-D-glucono-1,5-lactone + NADPH + H(+). It participates in carbohydrate degradation; pentose phosphate pathway; D-ribulose 5-phosphate from D-glucose 6-phosphate (oxidative stage): step 1/3. Functionally, cytosolic glucose-6-phosphate dehydrogenase that catalyzes the first and rate-limiting step of the oxidative branch within the pentose phosphate pathway/shunt, an alternative route to glycolysis for the dissimilation of carbohydrates and a major source of reducing power and metabolic intermediates for fatty acid and nucleic acid biosynthetic processes. This chain is Glucose-6-phosphate 1-dehydrogenase, found in Drosophila melanogaster (Fruit fly).